A 131-amino-acid polypeptide reads, in one-letter code: Hydrogenase maturation factor HypA (131 aa).

H2 contacts Ni(2+). The Zn(2+) site is built by C73, C76, C105, and C108.

The protein belongs to the HypA/HybF family.

In terms of biological role, involved in the maturation of [NiFe] hydrogenases. Required for nickel insertion into the metal center of the hydrogenase. The sequence is that of Hydrogenase maturation factor HypA from Thermomicrobium roseum (strain ATCC 27502 / DSM 5159 / P-2).